The chain runs to 557 residues: 6-phosphofructo-2-kinase/fructose-2,6-bisphosphatase 2 (557 aa).

A compositionally biased stretch (low complexity) spans 1–16 (MSENSTFSTEDSSSSS). The disordered stretch occupies residues 1–21 (MSENSTFSTEDSSSSSYKPHA). At S2 the chain carries N-acetylserine. The tract at residues 2–251 (SENSTFSTED…VYYLMNIHVH (250 aa)) is 6-phosphofructo-2-kinase. Position 32 is a phosphoserine; by PKA (S32). Residue 48–56 (GLPARGKTY) coordinates ATP. Residues R81 and R105 each coordinate beta-D-fructose 6-phosphate. D131 is a catalytic residue. Positions 133 and 139 each coordinate beta-D-fructose 6-phosphate. The active site involves C161. 170 to 175 (NILEVK) is a binding site for ATP. 3 residues coordinate beta-D-fructose 6-phosphate: K175, R196, and Y200. The tract at residues 252–557 (PRTIYLCRHG…PSMASLTLLS (306 aa)) is fructose-2,6-bisphosphatase. R259 contacts beta-D-fructose 2,6-bisphosphate. H260 functions as the Tele-phosphohistidine intermediate in the catalytic mechanism. 2 residues coordinate beta-D-fructose 2,6-bisphosphate: N266 and G272. Catalysis depends on E329, which acts as the Proton donor/acceptor. Beta-D-fructose 2,6-bisphosphate contacts are provided by Y340, R354, K358, Y369, Q395, and R399. An ATP-binding site is contributed by 351 to 354 (FALR). Residues 395–399 (QAVMR) and Y431 each bind ATP. A disordered region spans residues 449-495 (RDKPTHNFPKSQTPVRMRRNSFTPLSSSNTIRRPRNYSVGSRPLKPL). Positions 456 to 479 (FPKSQTPVRMRRNSFTPLSSSNTI) are enriched in polar residues. S469 carries the post-translational modification Phosphoserine. T471 is modified (phosphothreonine). A Phosphothreonine; by PKC modification is found at T478. Residues S486 and S496 each carry the phosphoserine modification.

The protein in the C-terminal section; belongs to the phosphoglycerate mutase family. As to quaternary structure, homodimer. Forms a heterodimer with PFKFB3. Post-translationally, phosphorylation by AMPK stimulates activity.

The catalysed reaction is beta-D-fructose 2,6-bisphosphate + H2O = beta-D-fructose 6-phosphate + phosphate. It carries out the reaction beta-D-fructose 6-phosphate + ATP = beta-D-fructose 2,6-bisphosphate + ADP + H(+). With respect to regulation, phosphorylation results in the activation of the kinase activity. In terms of biological role, synthesis and degradation of fructose 2,6-bisphosphate. This chain is 6-phosphofructo-2-kinase/fructose-2,6-bisphosphatase 2 (Pfkfb2), found in Rattus norvegicus (Rat).